Reading from the N-terminus, the 458-residue chain is Alpha-glucosides-binding periplasmic protein AglE (458 aa).

The first 27 residues, 1-27 (MKRSLLIGVAAFALLAGTAGLAGTAGA), serve as a signal peptide directing secretion.

The protein belongs to the bacterial solute-binding protein 1 family.

The protein localises to the periplasm. In terms of biological role, part of the binding-protein-dependent transport system for alpha-glucosides such as sucrose, maltose and trehalose. The chain is Alpha-glucosides-binding periplasmic protein AglE (aglE) from Rhizobium meliloti (strain 1021) (Ensifer meliloti).